Reading from the N-terminus, the 549-residue chain is Probable amidase (549 aa).

Active-site charge relay system residues include Lys-132 and Ser-209. Ser-233 acts as the Acyl-ester intermediate in catalysis.

This sequence belongs to the amidase family.

It catalyses the reaction a monocarboxylic acid amide + H2O = a monocarboxylate + NH4(+). This Saccharomyces cerevisiae (strain ATCC 204508 / S288c) (Baker's yeast) protein is Probable amidase (AMD2).